Consider the following 208-residue polypeptide: Uracil phosphoribosyltransferase (208 aa).

Residues R78, R103, and 130–138 (DPMLATGGS) contribute to the 5-phospho-alpha-D-ribose 1-diphosphate site. Uracil contacts are provided by residues I193 and 198–200 (GDA). Position 199 (D199) interacts with 5-phospho-alpha-D-ribose 1-diphosphate.

Belongs to the UPRTase family. Mg(2+) serves as cofactor.

The catalysed reaction is UMP + diphosphate = 5-phospho-alpha-D-ribose 1-diphosphate + uracil. Its pathway is pyrimidine metabolism; UMP biosynthesis via salvage pathway; UMP from uracil: step 1/1. Allosterically activated by GTP. In terms of biological role, catalyzes the conversion of uracil and 5-phospho-alpha-D-ribose 1-diphosphate (PRPP) to UMP and diphosphate. This Psychromonas ingrahamii (strain DSM 17664 / CCUG 51855 / 37) protein is Uracil phosphoribosyltransferase.